The following is a 92-amino-acid chain: Phosphoribosyl-ATP pyrophosphatase (92 aa).

This sequence belongs to the PRA-PH family.

Its subcellular location is the cytoplasm. It carries out the reaction 1-(5-phospho-beta-D-ribosyl)-ATP + H2O = 1-(5-phospho-beta-D-ribosyl)-5'-AMP + diphosphate + H(+). It participates in amino-acid biosynthesis; L-histidine biosynthesis; L-histidine from 5-phospho-alpha-D-ribose 1-diphosphate: step 2/9. The polypeptide is Phosphoribosyl-ATP pyrophosphatase (Leptospira biflexa serovar Patoc (strain Patoc 1 / ATCC 23582 / Paris)).